A 762-amino-acid chain; its full sequence is Mitochondrial intermediate peptidase (762 aa).

Residues methionine 1–tyrosine 28 constitute a mitochondrion transit peptide. Residue histidine 544 participates in Zn(2+) binding. Residue glutamate 545 is part of the active site. Positions 548 and 551 each coordinate Zn(2+).

This sequence belongs to the peptidase M3 family. It depends on Zn(2+) as a cofactor.

It is found in the mitochondrion matrix. It carries out the reaction Release of an N-terminal octapeptide as second stage of processing of some proteins imported into the mitochondrion.. Functionally, cleaves proteins, imported into the mitochondrion, to their mature size. While most mitochondrial precursor proteins are processed to the mature form in one step by mitochondrial processing peptidase (MPP), the sequential cleavage by MIP of an octapeptide after initial processing by MPP is a required step for a subgroup of nuclear-encoded precursor proteins destined for the matrix or the inner membrane. The protein is Mitochondrial intermediate peptidase (oct1) of Schizosaccharomyces pombe (strain 972 / ATCC 24843) (Fission yeast).